The chain runs to 553 residues: Undecaprenyl phosphate-alpha-4-amino-4-deoxy-L-arabinose arabinosyl transferase (553 aa).

The next 12 membrane-spanning stretches (helical) occupy residues 8-28 (LVLLLGFTLLYLLPLEFRALW), 83-103 (VRFGAVFSTTLSALMVAWLAF), 111-131 (VAVLSGVIFLTCLLVYGVGTY), 132-152 (AVLDPMITLWLVAAMCSFWLG), 176-196 (VMTKGFLALAVPVLGVLPWVI), 204-224 (VLLFGPLAIISATLITLPWAL), 255-275 (APFWYYIPFLIAGCLPWVALL), 288-308 (IESGTLYLLGWVVMPLLFFSI), 317-337 (ILPCFAPLAILLARHATQLVA), 350-370 (TVFGAVCALIVLLVLAPWGIA), 380-400 (VLKVIQASIAFLVWALVGYLT), and 407-427 (LWQWAALCPLGIALLVGGMIP).

It belongs to the glycosyltransferase 83 family.

The protein resides in the cell inner membrane. It catalyses the reaction 4-amino-4-deoxy-alpha-L-arabinopyranosyl di-trans,octa-cis-undecaprenyl phosphate + lipid IVA = lipid IIA + di-trans,octa-cis-undecaprenyl phosphate.. It participates in lipopolysaccharide metabolism; 4-amino-4-deoxy-beta-L-arabinose-lipid A biosynthesis. Catalyzes the transfer of the L-Ara4N moiety of the glycolipid undecaprenyl phosphate-alpha-L-Ara4N to lipid A. The modified arabinose is attached to lipid A and is required for resistance to polymyxin and cationic antimicrobial peptides. This Enterobacter sp. (strain 638) protein is Undecaprenyl phosphate-alpha-4-amino-4-deoxy-L-arabinose arabinosyl transferase.